Reading from the N-terminus, the 295-residue chain is UDP-N-acetylenolpyruvoylglucosamine reductase (295 aa).

Residues 23 to 188 (KVGGPADFLA…ISAKFALKPG (166 aa)) form the FAD-binding PCMH-type domain. Arginine 167 is an active-site residue. Serine 217 (proton donor) is an active-site residue. Residue glutamate 287 is part of the active site.

The protein belongs to the MurB family. It depends on FAD as a cofactor.

The protein localises to the cytoplasm. The enzyme catalyses UDP-N-acetyl-alpha-D-muramate + NADP(+) = UDP-N-acetyl-3-O-(1-carboxyvinyl)-alpha-D-glucosamine + NADPH + H(+). Its pathway is cell wall biogenesis; peptidoglycan biosynthesis. Its function is as follows. Cell wall formation. This is UDP-N-acetylenolpyruvoylglucosamine reductase from Streptococcus pyogenes serotype M28 (strain MGAS6180).